A 173-amino-acid chain; its full sequence is Regulatory protein RecX (173 aa).

The protein belongs to the RecX family.

Its subcellular location is the cytoplasm. Modulates RecA activity. The protein is Regulatory protein RecX of Mycobacterium marinum (strain ATCC BAA-535 / M).